A 312-amino-acid polypeptide reads, in one-letter code: Methionyl-tRNA formyltransferase (312 aa).

110–113 (SLLP) lines the (6S)-5,6,7,8-tetrahydrofolate pocket.

It belongs to the Fmt family.

The catalysed reaction is L-methionyl-tRNA(fMet) + (6R)-10-formyltetrahydrofolate = N-formyl-L-methionyl-tRNA(fMet) + (6S)-5,6,7,8-tetrahydrofolate + H(+). Attaches a formyl group to the free amino group of methionyl-tRNA(fMet). The formyl group appears to play a dual role in the initiator identity of N-formylmethionyl-tRNA by promoting its recognition by IF2 and preventing the misappropriation of this tRNA by the elongation apparatus. This is Methionyl-tRNA formyltransferase from Koribacter versatilis (strain Ellin345).